A 776-amino-acid chain; its full sequence is Microtubule-associated protein tau (776 aa).

Residues 1-26 show a composition bias toward basic and acidic residues; the sequence is MAEPRQEFEVMEDHAGTYGLGDRKDQ. The tract at residues 1 to 591 is disordered; that stretch reads MAEPRQEFEV…PVPMPDLKNV (591 aa). Position 2 is an N-acetylalanine (Ala2). Phosphotyrosine is present on residues Tyr18 and Tyr29. A Glycyl lysine isopeptide (Lys-Gly) (interchain with G-Cter in ubiquitin) cross-link involves residue Lys44. Phosphoserine occurs at positions 46 and 61. Positions 61-71 are enriched in polar residues; that stretch reads SETSDAKSTPT. Thr69, Thr71, and Thr111 each carry phosphothreonine. Composition is skewed to basic and acidic residues over residues 179-189 and 207-216; these read EGGRHAPELLK and GGKERPGSKE. Ser214 is modified (phosphoserine). Acidic residues predominate over residues 217-228; sequence EVDEDRDVDESS. 2 stretches are compositionally biased toward basic and acidic residues: residues 293–303 and 314–323; these read KGQDAHLEFTF and EQAHSEEHLG. Residues 324–340 are compositionally biased toward low complexity; it reads RAAFPGAPGEGPEARGP. Composition is skewed to basic and acidic residues over residues 344-356 and 381-393; these read EDTK…EPSE and KSKD…DKKA. Over residues 440 to 452 the composition is skewed to polar residues; it reads KYVSSVTPRTGSS. A compositionally biased stretch (basic and acidic residues) spans 455–466; sequence KEMKLKGADGKT. At Thr470 the chain carries Phosphothreonine. Arg472 is modified (omega-N-methylarginine). The residue at position 480 (Lys480) is an N6,N6-dimethyllysine; alternate. Lys480 is subject to N6-acetyllysine; alternate. Thr486, Thr492, and Thr498 each carry phosphothreonine. A phosphoserine mark is found at Ser502, Ser526, and Ser530. The span at 517-528 shows a compositional bias: basic and acidic residues; that stretch reads RSERGEPPKSGD. Low complexity predominate over residues 529-549; the sequence is RSGYSSPGSPGTPGSRSRTPS. The residue at position 532 (Tyr532) is a Phosphotyrosine. Residues Ser533, Ser534, and Ser537 each carry the phosphoserine modification. 2 positions are modified to phosphothreonine: Thr540 and Thr547. At Ser549 the chain carries Phosphoserine. Position 552 is a phosphothreonine (Thr552). Lys560 bears the N6-acetyllysine mark. Thr566 bears the Phosphothreonine mark. Ser570 and Ser572 each carry phosphoserine. Tau/MAP repeat units follow at residues 579 to 609, 610 to 640, 641 to 671, and 672 to 703; these read QTAP…GGGK, VQII…GGGS, VQIV…GGGQ, and VEVK…GGGN. Lys589 participates in a covalent cross-link: Glycyl lysine isopeptide (Lys-Gly) (interchain with G-Cter in ubiquitin). An N6-acetyllysine; alternate modification is found at Lys594. Residue Lys594 is modified to N6-methyllysine; alternate. Residue Lys594 forms a Glycyl lysine isopeptide (Lys-Gly) (interchain with G-Cter in ubiquitin); alternate linkage. Position 597 is a phosphoserine (Ser597). A Glycyl lysine isopeptide (Lys-Gly) (interchain with G-Cter in ubiquitin) cross-link involves residue Lys602. Lys616 is modified (N6-acetyllysine; alternate). Lys616 participates in a covalent cross-link: Glycyl lysine isopeptide (Lys-Gly) (interchain with G-Cter in ubiquitin); alternate. Phosphoserine occurs at positions 620 and 624. Residue Lys625 is modified to N6-acetyllysine. Position 628 is a phosphoserine (Ser628). Lys633 carries the N6-acetyllysine; alternate modification. A Glycyl lysine isopeptide (Lys-Gly) (interchain with G-Cter in ubiquitin); alternate cross-link involves residue Lys633. Ser640 bears the Phosphoserine mark. The residue at position 646 (Lys646) is an N6,N6-dimethyllysine; alternate. Residues Lys646, Lys652, and Lys656 each carry the N6-acetyllysine; alternate modification. Glycyl lysine isopeptide (Lys-Gly) (interchain with G-Cter in ubiquitin); alternate cross-links involve residues Lys646, Lys652, and Lys656. Residue Ser659 is modified to Phosphoserine. 3 positions are modified to N6-acetyllysine; alternate: Lys666, Lys678, and Lys682. Glycyl lysine isopeptide (Lys-Gly) (interchain with G-Cter in ubiquitin); alternate cross-links involve residues Lys666, Lys678, and Lys682. Arg684 is subject to Omega-N-methylarginine. A Phosphoserine modification is found at Ser687. Residue Lys688 forms a Glycyl lysine isopeptide (Lys-Gly) (interchain with G-Cter in ubiquitin) linkage. Ser691 is subject to Phosphoserine. Lys704 bears the N6-acetyllysine; alternate mark. Lys704 is covalently cross-linked (Glycyl lysine isopeptide (Lys-Gly) (interchain with G-Cter in ubiquitin); alternate). Residue Lys710 forms a Glycyl lysine isopeptide (Lys-Gly) (interchain with G-Cter in ubiquitin) linkage. Lys720 is subject to N6-acetyllysine; alternate. Residue Lys720 forms a Glycyl lysine isopeptide (Lys-Gly) (interchain with G-Cter in ubiquitin); alternate linkage. Tyr729 is subject to Phosphotyrosine. Phosphoserine occurs at positions 731 and 735. The segment at 733 to 752 is disordered; that stretch reads VVSGDTSPRHLSNVSSTGSI. Polar residues predominate over residues 736-751; it reads GDTSPRHLSNVSSTGS. The residue at position 738 (Thr738) is a Phosphothreonine. Phosphoserine occurs at positions 739, 744, 751, and 757. Phosphothreonine is present on Thr762.

Interacts with MARK1, MARK2, MARK3 and MARK4. Interacts with SQSTM1 when polyubiquitinated. Interacts with PSMC2 through SQSTM1. Interacts with FKBP4. Binds to CSNK1D. Interacts with SGK1. Interacts with EPM2A; the interaction dephosphorylates MAPT at Ser-396. Interacts with PIN1. Interacts with LRRK2. Interacts with LRP1, leading to endocytosis; this interaction is reduced in the presence of LRPAP1/RAP. Post-translationally, polyubiquitinated. Requires functional TRAF6 and may provoke SQSTM1-dependent degradation by the proteasome. Phosphorylation at various serine and threonine residues in S-P or T-P motifs by proline-directed protein kinases (PDPK1, CDK1, CDK5, GSK3, MAPK) (a few sites per protein in interphase, more in mitosis), and at serine residues in K-X-G-S motifs by MAP/microtubule affinity-regulating kinase (MARK1, MARK2, MARK3 or MARK4), causing detachment from microtubules, and their disassembly. Phosphorylation at Ser-597 by BRSK1 and BRSK2 in neurons affects ability to bind microtubules and plays a role in neuron polarization. Phosphorylated by PHK. Dephosphorylation at several serine and threonine residues by the serine/threonine phosphatase PPP5C. Phosphorylation at Ser-214 by SGK1 mediates microtubule depolymerization and neurite formation in hippocampal neurons.

It localises to the cytoplasm. Its subcellular location is the cytosol. It is found in the cell membrane. The protein localises to the cytoskeleton. The protein resides in the cell projection. It localises to the axon. Its subcellular location is the dendrite. Functionally, promotes microtubule assembly and stability, and might be involved in the establishment and maintenance of neuronal polarity. The C-terminus binds axonal microtubules while the N-terminus binds neural plasma membrane components, suggesting that tau functions as a linker protein between both. Axonal polarity is predetermined by tau localization (in the neuronal cell) in the domain of the cell body defined by the centrosome. The short isoforms allow plasticity of the cytoskeleton whereas the longer isoforms may preferentially play a role in its stabilization. This is Microtubule-associated protein tau (MAPT) from Pan troglodytes (Chimpanzee).